Consider the following 555-residue polypeptide: Branched-chain-amino-acid aminotransferase-like protein 1 (555 aa).

Belongs to the class-IV pyridoxal-phosphate-dependent aminotransferase family.

This Arabidopsis thaliana (Mouse-ear cress) protein is Branched-chain-amino-acid aminotransferase-like protein 1.